A 149-amino-acid polypeptide reads, in one-letter code: Transcriptional repressor NrdR (149 aa).

The segment at 3–34 (CPFCSATDTKVIDSRLVADGHQVRRRRECTEC) is a zinc-finger region. The 91-residue stretch at 49–139 (PRVIKRDGTR…VYRAFEDVSQ (91 aa)) folds into the ATP-cone domain.

It belongs to the NrdR family. Requires Zn(2+) as cofactor.

Its function is as follows. Negatively regulates transcription of bacterial ribonucleotide reductase nrd genes and operons by binding to NrdR-boxes. The protein is Transcriptional repressor NrdR of Shewanella frigidimarina (strain NCIMB 400).